Here is a 139-residue protein sequence, read N- to C-terminus: D-ribose pyranase (139 aa).

Histidine 20 functions as the Proton donor in the catalytic mechanism. Substrate is bound by residues aspartate 28, histidine 106, and 128–130 (YAN).

This sequence belongs to the RbsD / FucU family. RbsD subfamily. As to quaternary structure, homodecamer.

Its subcellular location is the cytoplasm. It carries out the reaction beta-D-ribopyranose = beta-D-ribofuranose. Its pathway is carbohydrate metabolism; D-ribose degradation; D-ribose 5-phosphate from beta-D-ribopyranose: step 1/2. Catalyzes the interconversion of beta-pyran and beta-furan forms of D-ribose. This chain is D-ribose pyranase, found in Aeromonas hydrophila subsp. hydrophila (strain ATCC 7966 / DSM 30187 / BCRC 13018 / CCUG 14551 / JCM 1027 / KCTC 2358 / NCIMB 9240 / NCTC 8049).